The chain runs to 216 residues: Adenylate kinase (216 aa).

10–15 (GAGKGT) serves as a coordination point for ATP. Residues 30-59 (STGDMLRAAVKAGTPLGLELKKVMDAGQLV) are NMP. AMP is bound by residues Thr31, Arg36, 57–59 (QLV), 85–88 (GFPR), and Gln92. The tract at residues 122-159 (GRRVHLASGRTYHIQYNPPKVEGKDDETGEDLIQRDDD) is LID. Residues Arg123 and 132 to 133 (TY) contribute to the ATP site. The AMP site is built by Arg156 and Arg167. Position 202 (Gly202) interacts with ATP.

It belongs to the adenylate kinase family. Monomer.

The protein resides in the cytoplasm. It catalyses the reaction AMP + ATP = 2 ADP. Its pathway is purine metabolism; AMP biosynthesis via salvage pathway; AMP from ADP: step 1/1. Its function is as follows. Catalyzes the reversible transfer of the terminal phosphate group between ATP and AMP. Plays an important role in cellular energy homeostasis and in adenine nucleotide metabolism. This chain is Adenylate kinase, found in Pseudomonas putida (strain ATCC 700007 / DSM 6899 / JCM 31910 / BCRC 17059 / LMG 24140 / F1).